Here is a 209-residue protein sequence, read N- to C-terminus: Small ribosomal subunit protein uS4 (209 aa).

The region spanning 99-161 (CRLDNIAFRL…SSKLVVVEMG (63 aa)) is the S4 RNA-binding domain.

This sequence belongs to the universal ribosomal protein uS4 family. In terms of assembly, part of the 30S ribosomal subunit. Contacts protein S5. The interaction surface between S4 and S5 is involved in control of translational fidelity.

One of the primary rRNA binding proteins, it binds directly to 16S rRNA where it nucleates assembly of the body of the 30S subunit. Its function is as follows. With S5 and S12 plays an important role in translational accuracy. This is Small ribosomal subunit protein uS4 from Acidobacterium capsulatum (strain ATCC 51196 / DSM 11244 / BCRC 80197 / JCM 7670 / NBRC 15755 / NCIMB 13165 / 161).